The chain runs to 256 residues: UPF0246 protein Swoo_1284 (256 aa).

This sequence belongs to the UPF0246 family.

This chain is UPF0246 protein Swoo_1284, found in Shewanella woodyi (strain ATCC 51908 / MS32).